The sequence spans 725 residues: Manganese-exporting P-type ATPase (725 aa).

Residues 25–92 (GRMRIQIEWV…AISGAAHVAA (68 aa)) form the HMA domain. 6 helical membrane-spanning segments follow: residues 101-119 (HSSD…GAAA), 142-160 (LVAS…RGAL), 165-179 (TGTD…IASL), 188-202 (LAVL…YLQD), 335-359 (VGEN…AITK), and 365-383 (MTVL…TPTA). Asp-416 functions as the 4-aspartylphosphate intermediate in the catalytic mechanism. Residues Asp-416, Thr-418, and Asp-618 each contribute to the Mg(2+) site. 2 consecutive transmembrane segments (helical) span residues 669–688 (AVEV…AAGL) and 698–717 (PVLA…ANSS).

This sequence belongs to the cation transport ATPase (P-type) (TC 3.A.3) family. Type IB subfamily.

It is found in the cell membrane. It catalyses the reaction Mn(2+)(in) + ATP + H2O = Mn(2+)(out) + ADP + phosphate + H(+). Functionally, high affinity, slow turnover Mn(2+) transporting ATPase. This is Manganese-exporting P-type ATPase (ctpC) from Mycobacterium leprae (strain TN).